The following is a 114-amino-acid chain: U5-lycotoxin-Ls1a (114 aa).

Positions 1–20 (MKYQILFGVVFLTLLSYCYS) are cleaved as a signal peptide. A propeptide spanning residues 21–45 (EIEDEFENFVDEEMVEADDPFSLAR) is cleaved from the precursor. 3 disulfide bridges follow: cysteine 51–cysteine 66, cysteine 65–cysteine 93, and cysteine 77–cysteine 91.

This sequence belongs to the neurotoxin 19 (CSTX) family. 04 (U1-Lctx) subfamily. Expressed by the venom gland.

It localises to the secreted. The protein is U5-lycotoxin-Ls1a of Lycosa singoriensis (Wolf spider).